Here is a 337-residue protein sequence, read N- to C-terminus: Methionine import ATP-binding protein MetN (337 aa).

Residues 4–240 (IKNLEITYPG…PWHPITKEFV (237 aa)) enclose the ABC transporter domain. ATP is bound at residue 37–44 (GLSGAGKS).

Belongs to the ABC transporter superfamily. Methionine importer (TC 3.A.1.24) family. The complex is composed of two ATP-binding proteins (MetN), two transmembrane proteins (MetI) and a solute-binding protein (MetQ).

The protein resides in the cell membrane. It catalyses the reaction L-methionine(out) + ATP + H2O = L-methionine(in) + ADP + phosphate + H(+). The enzyme catalyses D-methionine(out) + ATP + H2O = D-methionine(in) + ADP + phosphate + H(+). Functionally, part of the ABC transporter complex MetNIQ involved in methionine import. Responsible for energy coupling to the transport system. In Carboxydothermus hydrogenoformans (strain ATCC BAA-161 / DSM 6008 / Z-2901), this protein is Methionine import ATP-binding protein MetN.